A 224-amino-acid chain; its full sequence is uncharacterized protein (224 aa).

This is an uncharacterized protein from Listeria innocua serovar 6a (strain ATCC BAA-680 / CLIP 11262).